A 794-amino-acid polypeptide reads, in one-letter code: Mitochondrial intermediate peptidase (794 aa).

The transit peptide at 1–39 (MRVTSSRLLQGGSLVSRVLKRRLNNASRTKKGWFSTRTL) directs the protein to the mitochondrion. Residue His581 participates in Zn(2+) binding. Glu582 is an active-site residue. Residues His585 and His588 each coordinate Zn(2+).

Belongs to the peptidase M3 family. Zn(2+) serves as cofactor.

The protein resides in the mitochondrion matrix. It carries out the reaction Release of an N-terminal octapeptide as second stage of processing of some proteins imported into the mitochondrion.. Functionally, cleaves proteins, imported into the mitochondrion, to their mature size. While most mitochondrial precursor proteins are processed to the mature form in one step by mitochondrial processing peptidase (MPP), the sequential cleavage by MIP of an octapeptide after initial processing by MPP is a required step for a subgroup of nuclear-encoded precursor proteins destined for the matrix or the inner membrane. The protein is Mitochondrial intermediate peptidase (OCT1) of Debaryomyces hansenii (strain ATCC 36239 / CBS 767 / BCRC 21394 / JCM 1990 / NBRC 0083 / IGC 2968) (Yeast).